Reading from the N-terminus, the 217-residue chain is Probable transaldolase (217 aa).

Lys83 serves as the catalytic Schiff-base intermediate with substrate.

This sequence belongs to the transaldolase family. Type 3B subfamily.

Its subcellular location is the cytoplasm. It catalyses the reaction D-sedoheptulose 7-phosphate + D-glyceraldehyde 3-phosphate = D-erythrose 4-phosphate + beta-D-fructose 6-phosphate. The protein operates within carbohydrate degradation; pentose phosphate pathway; D-glyceraldehyde 3-phosphate and beta-D-fructose 6-phosphate from D-ribose 5-phosphate and D-xylulose 5-phosphate (non-oxidative stage): step 2/3. Transaldolase is important for the balance of metabolites in the pentose-phosphate pathway. The polypeptide is Probable transaldolase (Anaeromyxobacter sp. (strain K)).